The sequence spans 234 residues: MTRDWLRRGLRFLLFAMLGFVGLSVLLVLVFRVVPVFGSMVMLERKVESWVSGEPVSIQQQWRPWNALSDNAKLAVIASEDQRFPMHHGFDFNQMQKALDAWFSGDSLRGASTISQQTAKNLFLWTDRSWVRKGLEAWFTVLIELLWPKERILEVYLNIVEWDRGVFGLEAAAQHYFGVSADRLSAAQASRLAAILPNPREWSASRPSSYIVKRSQWIQRQMRQLGGSAYLERL.

The chain crosses the membrane as a helical span at residues 11–31 (RFLLFAMLGFVGLSVLLVLVF).

It belongs to the glycosyltransferase 51 family.

It is found in the cell inner membrane. The catalysed reaction is [GlcNAc-(1-&gt;4)-Mur2Ac(oyl-L-Ala-gamma-D-Glu-L-Lys-D-Ala-D-Ala)](n)-di-trans,octa-cis-undecaprenyl diphosphate + beta-D-GlcNAc-(1-&gt;4)-Mur2Ac(oyl-L-Ala-gamma-D-Glu-L-Lys-D-Ala-D-Ala)-di-trans,octa-cis-undecaprenyl diphosphate = [GlcNAc-(1-&gt;4)-Mur2Ac(oyl-L-Ala-gamma-D-Glu-L-Lys-D-Ala-D-Ala)](n+1)-di-trans,octa-cis-undecaprenyl diphosphate + di-trans,octa-cis-undecaprenyl diphosphate + H(+). The protein operates within cell wall biogenesis; peptidoglycan biosynthesis. Peptidoglycan polymerase that catalyzes glycan chain elongation from lipid-linked precursors. This chain is Biosynthetic peptidoglycan transglycosylase, found in Chromohalobacter salexigens (strain ATCC BAA-138 / DSM 3043 / CIP 106854 / NCIMB 13768 / 1H11).